Here is a 698-residue protein sequence, read N- to C-terminus: UV radiation resistance-associated protein (698 aa).

The segment covering 1 to 10 (MSSCASLGGP) has biased composition (low complexity). The disordered stretch occupies residues 1-21 (MSSCASLGGPVPLPPPGPSAA). One can recognise a C2 domain in the interval 23–149 (TSGAPARALH…YLGQQIHARN (127 aa)). The sufficient for interaction with STX7; VTI1B AND STX8 stretch occupies residues 199-268 (HRAQCAIKQT…REVAFLHKQQ (70 aa)). A coiled-coil region spans residues 200-304 (RAQCAIKQTQ…LRKECTAKRE (105 aa)). Positions 269 to 441 (MALQDKGSAF…IAQLRYQHGL (173 aa)) are sufficient for interaction with VPS16, required for interaction with CEP63. A required for interaction with PRKDC, XRCC6 and XRCC5 region spans residues 442 to 698 (GTPDLRQTLP…FRRPRRSSDK (257 aa)). Disordered regions lie at residues 477 to 551 (PKRQ…SSLD) and 565 to 586 (VDLG…EQGE). At Ser492 the chain carries Phosphoserine. Ser497 carries the post-translational modification Phosphoserine; by MTOR. Ser507 is subject to Phosphoserine. The residue at position 517 (Thr517) is a Phosphothreonine. Ser521, Ser548, Ser549, Ser570, and Ser688 each carry phosphoserine.

Component of the PI3K (PI3KC3/PI3K-III/class III phosphatidylinositol 3-kinase) complex II (PI3KC3-C2) in which the core composed of the catalytic subunit PIK3C3, the regulatory subunit PIK3R4 and BECN1 is associated with UVRAG; in the complex interacts directly with BECN1. PI3KC3-C2 can associate with further regulatory subunits such as RUBCN and probably SH3GLB1/Bif-1. Interacts with SH3GLB1; UVRAG bridges the interaction to BECN1 indicative for an association with the PI3K complex PI3KC3-C2. Interacts with RINT1. Associates with the NRZ complex under basal conditions and dissociates from it under autophagy conditions to associate with the PI3K complex; these complex associations seem to be mutually exclusive. Interacts with VPS16; VPS11; VPS18; VPS33 (VPS33A or VPS33B) and VPS39; indicative for an association with a class C Vps tethering complex (possibly the HOPS complex). Interacts with RAB7A; RAB7A competes with UVRAG for RUBCN binding. Interacts with STX7, VTI1B, STX8. Interacts with PRKDC, XRCC6 and XRCC5; indicative for an association with the DNA-dependent protein kinase complex DNA-PK. Interacts with CEP63. Directly interacts with FEZ1 and SCOC; the interaction with SCOC is reduced by amino acid starvation, but the complex is stabilized in the presence of FEZ1. Interacts with BECN1P1/BECN2. Interacts with SLAMF1. Interacts with RUBCNL/PACER; promoting targeting of UVRAG to autophagosome. Interacts with WNK1. Post-translationally, phosphorylated at Ser-497 by MTOR under basal conditions; increases the interaction with RUBCN implicated in inhibitory effect of RUBCN on PI3KC3 and decreases interaction with RAB7A, and VPS16 and VPS39 (indicative for a class C Vps complex, possibly the HOPS complex).

Its subcellular location is the late endosome. The protein resides in the lysosome. It localises to the cytoplasmic vesicle. The protein localises to the autophagosome. It is found in the early endosome. Its subcellular location is the endoplasmic reticulum. The protein resides in the midbody. It localises to the chromosome. The protein localises to the centromere. Its function is as follows. Versatile protein that is involved in regulation of different cellular pathways implicated in membrane trafficking. Involved in regulation of the COPI-dependent retrograde transport from Golgi and the endoplasmic reticulum by associating with the NRZ complex; the function is dependent on its binding to phosphatidylinositol 3-phosphate (PtdIns(3)P). During autophagy acts as a regulatory subunit of the alternative PI3K complex II (PI3KC3-C2) that mediates formation of phosphatidylinositol 3-phosphate and is believed to be involved in maturation of autophagosomes and endocytosis. Activates lipid kinase activity of PIK3C3. Involved in the regulation of degradative endocytic trafficking and cytokinesis, and in regulation of ATG9A transport from the Golgi to the autophagosome; the functions seems to implicate its association with PI3KC3-C2. Involved in maturation of autophagosomes and degradative endocytic trafficking independently of BECN1 but depending on its association with a class C Vps complex (possibly the HOPS complex); the association is also proposed to promote autophagosome recruitment and activation of Rab7 and endosome-endosome fusion events. Enhances class C Vps complex (possibly HOPS complex) association with a SNARE complex and promotes fusogenic SNARE complex formation during late endocytic membrane fusion. In case of negative-strand RNA virus infection is required for efficient virus entry, promotes endocytic transport of virions and is implicated in a VAMP8-specific fusogenic SNARE complex assembly. Involved in maintaining chromosomal stability. Promotes DNA double-strand break (DSB) repair by association with DNA-dependent protein kinase complex DNA-PK and activating it in non-homologous end joining (NHEJ). Required for centrosome stability and proper chromosome segregation. In Mus musculus (Mouse), this protein is UV radiation resistance-associated protein (Uvrag).